Reading from the N-terminus, the 814-residue chain is Kinesin-like protein KIF6 (814 aa).

The 341-residue stretch at 5-345 folds into the Kinesin motor domain; it reads TIQIFARVKP…CRFAQRVALI (341 aa). Residue 97–104 coordinates ATP; the sequence is GQTGSGKT. Coiled coils occupy residues 356–385, 456–494, and 588–683; these read NPRL…QRTE, LKEE…EALH, and EAKA…KEFE. The tract at residues 752–788 is disordered; sequence LPSPCPSPHSQKQSSTSTPLEDSIPKRPVSSIPLTGD. A compositionally biased stretch (polar residues) spans 759–771; it reads PHSQKQSSTSTPL.

It belongs to the TRAFAC class myosin-kinesin ATPase superfamily. Kinesin family.

It localises to the cytoplasm. The protein localises to the cytoskeleton. The sequence is that of Kinesin-like protein KIF6 (KIF6) from Homo sapiens (Human).